A 382-amino-acid polypeptide reads, in one-letter code: Mannitol-1-phosphate 5-dehydrogenase (382 aa).

4–15 (AVHFGAGNIGRG) provides a ligand contact to NAD(+).

This sequence belongs to the mannitol dehydrogenase family.

The catalysed reaction is D-mannitol 1-phosphate + NAD(+) = beta-D-fructose 6-phosphate + NADH + H(+). The sequence is that of Mannitol-1-phosphate 5-dehydrogenase from Vibrio campbellii (strain ATCC BAA-1116).